The primary structure comprises 470 residues: Asparagine--tRNA ligase (470 aa).

The protein belongs to the class-II aminoacyl-tRNA synthetase family. In terms of assembly, homodimer.

Its subcellular location is the cytoplasm. It carries out the reaction tRNA(Asn) + L-asparagine + ATP = L-asparaginyl-tRNA(Asn) + AMP + diphosphate + H(+). This is Asparagine--tRNA ligase from Blochmanniella floridana.